A 729-amino-acid chain; its full sequence is Transient receptor potential cation channel subfamily V member 5 (729 aa).

The Cytoplasmic portion of the chain corresponds to 1–327 (MGGFLPKAEG…SFKWNKYGRP (327 aa)). ANK repeat units follow at residues 44-74 (ILES…DVRQ), 78-107 (LGET…ELVF), 116-145 (AGQT…SVSA), 162-191 (FGEH…DIRA), 195-228 (LGNT…HGDH), and 239-268 (QGLT…HIQW). The chain crosses the membrane as a helical span at residues 328–348 (YFCILAALYLLYMICFTTCCV). The Extracellular portion of the chain corresponds to 349–385 (YRPLKFRGGNRTHSRDITILQQKLLQEAYETREDIIR). N-linked (GlcNAc...) asparagine glycosylation is present at Asn358. Residues 386 to 408 (LVGELVSIVGAVIILLLEIPDIF) traverse the membrane as a helical segment. At 409–419 (RVGASRYFGKT) the chain is on the cytoplasmic side. The helical transmembrane segment at 420 to 442 (ILGGPFHVIIITYASLVLVTMVM) threads the bilayer. Topologically, residues 443 to 448 (RLTNTN) are extracellular. Residues 449 to 469 (GEVVPMSFALVLGWCSVMYFT) form a helical membrane-spanning segment. At 470-492 (RGFQMLGPFTIMIQKMIFGDLMR) the chain is on the cytoplasmic side. The chain crosses the membrane as a helical span at residues 493 to 513 (FCWLMAVVILGFASAFYIIFQ). An intramembrane region (pore-forming) is located at residues 524 to 544 (YDYPMALFTTFELFLTVIDAP). Asp542 is a Ca(2+) binding site. A helical transmembrane segment spans residues 557-577 (IVNFAFTIIATLLMLNLFIAM). Residues 578 to 729 (MGDTHWRVAQ…EGDGEEVYHF (152 aa)) lie on the Cytoplasmic side of the membrane. The interval 598–602 (VATTV) is interaction with S100A10. The interval 650-653 (VFKN) is involved in Ca(2+)-dependent inactivation. Positions 654–665 (SDKEDDQEHPSE) are enriched in basic and acidic residues. A disordered region spans residues 654–675 (SDKEDDQEHPSEKQPSGAESGT). Position 685 is a phosphothreonine (Thr685). Phosphoserine is present on Ser689. The segment at 700–729 (GWEILRQNTLGHLNLGLNLSEGDGEEVYHF) is involved in Ca(2+)-dependent inactivation.

The protein belongs to the transient receptor (TC 1.A.4) family. TrpV subfamily. TRPV5 sub-subfamily. Homotetramer and probably heterotetramer with TRPV6. Interacts with TRPV6. Interacts with S100A10 and probably with the ANAX2-S100A10 heterotetramer. The interaction with S100A10 is required for the trafficking to the plasma membrane. Interacts with calmodulin. Interacts with BSPRY, which results in its inactivation. Glycosylated. In terms of tissue distribution, expressed at high levels in kidney, small intestine and pancreas, and at lower levels in testis, prostate, placenta, brain, colon and rectum.

The protein resides in the apical cell membrane. It catalyses the reaction Ca(2+)(in) = Ca(2+)(out). Its activity is regulated as follows. Activated by WNK3. In terms of biological role, constitutively active calcium selective cation channel thought to be involved in Ca(2+) reabsorption in kidney and intestine. Required for normal Ca(2+) reabsorption in the kidney distal convoluted tubules. The channel is activated by low internal calcium level and the current exhibits an inward rectification. A Ca(2+)-dependent feedback regulation includes fast channel inactivation and slow current decay. Heteromeric assembly with TRPV6 seems to modify channel properties. TRPV5-TRPV6 heteromultimeric concatemers exhibit voltage-dependent gating. This Homo sapiens (Human) protein is Transient receptor potential cation channel subfamily V member 5 (TRPV5).